The primary structure comprises 223 residues: ATP synthase subunit a 1 (223 aa).

5 helical membrane-spanning segments follow: residues 20–40 (LTIATTWALMLVLVGGSAFAS), 78–98 (YLPYLGTLFIFIAFSNLCTII), 108–128 (LSTTAALAMSVFVAVPLFGIA), 174–194 (MILAILLTVTPFVFPVLMSVL), and 196–216 (LLTGMVQAYIFSILATVYISA).

This sequence belongs to the ATPase A chain family. F-type ATPases have 2 components, CF(1) - the catalytic core - and CF(0) - the membrane proton channel. CF(1) has five subunits: alpha(3), beta(3), gamma(1), delta(1), epsilon(1). CF(0) has four main subunits: a, b, b' and c.

Its subcellular location is the cell inner membrane. Its function is as follows. Key component of the proton channel; it plays a direct role in the translocation of protons across the membrane. The protein is ATP synthase subunit a 1 of Chlorobium luteolum (strain DSM 273 / BCRC 81028 / 2530) (Pelodictyon luteolum).